The primary structure comprises 387 residues: Probable nitrate transporter NarT (387 aa).

The next 12 membrane-spanning stretches (helical) occupy residues 14–34 (TLSLVAGFMAWSIISPLMPFI), 45–65 (ISVILAIPVILGSVLRVPFGY), 69–89 (IVGAKWVFFWSFIVLLLPIFL), 97–117 (GMLMLSGFFLGIGGAIFSVGV), 137–157 (GVGNIGTAVSSFCAPVLAGAI), 161–181 (NTVRSYLIILSIFAILMFFLG), 211–231 (WYFITFGAFVAFGIFLPNFLV), 246–266 (GIFIALATFLRPVGGVIGDKF), 268–288 (AVQALIIDFVIMIIGALILSL), 294–314 (LFTIGCLAISICAGIGNGLIF), 330–350 (GIVSMMGGLGGFFPPLVITFV), and 358–378 (HLAFFFLAIFGVIALITMIHL).

Belongs to the major facilitator superfamily. Nitrate/nitrite porter (TC 2.A.1.8) family.

It localises to the cell membrane. Functionally, probably required for nitrate uptake under anoxic conditions. Also possibly involved in excretion of nitrite produced by the dissimilatory reduction of nitrate. This chain is Probable nitrate transporter NarT (narT), found in Staphylococcus epidermidis (strain ATCC 35984 / DSM 28319 / BCRC 17069 / CCUG 31568 / BM 3577 / RP62A).